Consider the following 237-residue polypeptide: uncharacterized protein (237 aa).

Residues 1 to 28 form the signal peptide; that stretch reads MVFSFSTFNRLVTFTVMAAIVSVRPLTA.

This is an uncharacterized protein from Sinorhizobium fredii (strain NBRC 101917 / NGR234).